Consider the following 74-residue polypeptide: Probable tetrachloroethene reductive dehalogenase membrane anchor protein (74 aa).

The next 2 membrane-spanning stretches (helical) occupy residues 11–31 and 40–60; these read ALGL…ISMG and AGSI…FLLM.

The protein belongs to the PceB family.

It is found in the cell inner membrane. Its function is as follows. May act as a membrane anchor for the tetrachloroethene reductive dehalogenase PceA. This Sulfurospirillum multivorans (Dehalospirillum multivorans) protein is Probable tetrachloroethene reductive dehalogenase membrane anchor protein.